Here is a 60-residue protein sequence, read N- to C-terminus: MAKKGNRIQVILECTEHKASGVAGTSRYITTKNKKNTPDRLEIKKFNPVLKRVTVHKEIK.

This sequence belongs to the bacterial ribosomal protein bL33 family.

In Flavobacterium psychrophilum (strain ATCC 49511 / DSM 21280 / CIP 103535 / JIP02/86), this protein is Large ribosomal subunit protein bL33.